The primary structure comprises 529 residues: Serine/threonine-protein kinase RIO2 (529 aa).

The Protein kinase domain occupies Val-97–Phe-273. Position 123 (Lys-123) interacts with ATP. Catalysis depends on Asp-228, which acts as the Proton acceptor. Disordered stretches follow at residues Arg-331–Glu-366 and Glu-411–Ala-452. A compositionally biased stretch (acidic residues) spans Asp-337 to Asp-346. Residues Glu-411–Asp-428 show a composition bias toward basic and acidic residues. Acidic residues predominate over residues Ser-429–Ala-447.

This sequence belongs to the protein kinase superfamily. RIO-type Ser/Thr kinase family. Mg(2+) is required as a cofactor. In terms of tissue distribution, expressed in pharynx (metacorpus and posterior bulbus). Expression is restricted to adult stage.

It carries out the reaction L-seryl-[protein] + ATP = O-phospho-L-seryl-[protein] + ADP + H(+). The catalysed reaction is L-threonyl-[protein] + ATP = O-phospho-L-threonyl-[protein] + ADP + H(+). Required for larval development. The sequence is that of Serine/threonine-protein kinase RIO2 from Caenorhabditis elegans.